Here is a 356-residue protein sequence, read N- to C-terminus: Methylthioribose-1-phosphate isomerase (356 aa).

Substrate is bound by residues 53–55 (RGA), arginine 97, and glutamine 203. The Proton donor role is filled by aspartate 244. 254-255 (NK) contributes to the substrate binding site.

The protein belongs to the eIF-2B alpha/beta/delta subunits family. MtnA subfamily.

The catalysed reaction is 5-(methylsulfanyl)-alpha-D-ribose 1-phosphate = 5-(methylsulfanyl)-D-ribulose 1-phosphate. The protein operates within amino-acid biosynthesis; L-methionine biosynthesis via salvage pathway; L-methionine from S-methyl-5-thio-alpha-D-ribose 1-phosphate: step 1/6. In terms of biological role, catalyzes the interconversion of methylthioribose-1-phosphate (MTR-1-P) into methylthioribulose-1-phosphate (MTRu-1-P). This is Methylthioribose-1-phosphate isomerase from Rhodopirellula baltica (strain DSM 10527 / NCIMB 13988 / SH1).